The sequence spans 433 residues: LanC-like protein GCL1 (433 aa).

Residues 1 to 22 are disordered; it reads MSSSVDFVTEQGRCGDDGNGAG.

This sequence belongs to the LanC-like protein family.

May play a role in signaling. May be not involved in abscisic acid (ABA) signaling. The sequence is that of LanC-like protein GCL1 (GCL1) from Arabidopsis thaliana (Mouse-ear cress).